We begin with the raw amino-acid sequence, 132 residues long: Small ribosomal subunit protein uS8 (132 aa).

Belongs to the universal ribosomal protein uS8 family. In terms of assembly, part of the 30S ribosomal subunit. Contacts proteins S5 and S12.

In terms of biological role, one of the primary rRNA binding proteins, it binds directly to 16S rRNA central domain where it helps coordinate assembly of the platform of the 30S subunit. The sequence is that of Small ribosomal subunit protein uS8 from Desulfitobacterium hafniense (strain DSM 10664 / DCB-2).